Consider the following 1007-residue polypeptide: Probable inorganic carbon transporter subunit DabA (1007 aa).

Residues C442, D444, H696, and C711 each contribute to the Zn(2+) site.

It belongs to the inorganic carbon transporter (TC 9.A.2) DabA family. As to quaternary structure, forms a complex with DabB. It depends on Zn(2+) as a cofactor.

It localises to the cell inner membrane. Its function is as follows. Part of an energy-coupled inorganic carbon pump. The polypeptide is Probable inorganic carbon transporter subunit DabA (Aquifex aeolicus (strain VF5)).